Reading from the N-terminus, the 91-residue chain is Large ribosomal subunit protein uL23c (91 aa).

The protein belongs to the universal ribosomal protein uL23 family. In terms of assembly, part of the 50S ribosomal subunit.

It is found in the plastid. The protein resides in the chloroplast. Binds to 23S rRNA. This chain is Large ribosomal subunit protein uL23c (rpl23), found in Physcomitrium patens (Spreading-leaved earth moss).